Reading from the N-terminus, the 432-residue chain is Protein RETICULATA, chloroplastic (432 aa).

The N-terminal 47 residues, M1 to R47, are a transit peptide targeting the chloroplast. Residues G109–Y140 are disordered. Positions V111 to E132 are enriched in gly residues. 2 helical membrane passes run L249 to A269 and I322 to I342.

This sequence belongs to the RETICULATA family. In terms of tissue distribution, highly expressed in the vasculature of developing leaf primordia, margins of fully expanded leaves, hydathodes of rosette of cauline leaves, basal region of the lamina, stipules, root tips, stamens and in the abscission zone of the funiculus.

The protein resides in the plastid. Its subcellular location is the chloroplast membrane. Its function is as follows. May play a role in leaf development. Required for leaf mesophyll cell division in the early stages of leaf organogenesis. Acts in a developmental pathway that involves PPT1/CUE1 but does not include ASE2/DOV1. In Arabidopsis thaliana (Mouse-ear cress), this protein is Protein RETICULATA, chloroplastic.